The primary structure comprises 439 residues: NAD kinase (439 aa).

Phosphoserine occurs at positions 46, 48, 50, 55, and 64.

Belongs to the NAD kinase family. Requires a divalent metal cation as cofactor.

It carries out the reaction NAD(+) + ATP = ADP + NADP(+) + H(+). The protein is NAD kinase (Nadk) of Mus musculus (Mouse).